Here is a 229-residue protein sequence, read N- to C-terminus: Uracil-DNA glycosylase (229 aa).

Catalysis depends on Asp65, which acts as the Proton acceptor.

It belongs to the uracil-DNA glycosylase (UDG) superfamily. UNG family.

It localises to the cytoplasm. The enzyme catalyses Hydrolyzes single-stranded DNA or mismatched double-stranded DNA and polynucleotides, releasing free uracil.. In terms of biological role, excises uracil residues from the DNA which can arise as a result of misincorporation of dUMP residues by DNA polymerase or due to deamination of cytosine. This Limosilactobacillus reuteri (strain DSM 20016) (Lactobacillus reuteri) protein is Uracil-DNA glycosylase.